Here is a 314-residue protein sequence, read N- to C-terminus: tRNA dimethylallyltransferase (314 aa).

12-19 (GPTASGKT) serves as a coordination point for ATP. Residue 14 to 19 (TASGKT) participates in substrate binding. Interaction with substrate tRNA regions lie at residues 37 to 40 (DSAL), 161 to 165 (QRIQR), and 244 to 249 (RCVGYR).

Belongs to the IPP transferase family. In terms of assembly, monomer. Mg(2+) is required as a cofactor.

The catalysed reaction is adenosine(37) in tRNA + dimethylallyl diphosphate = N(6)-dimethylallyladenosine(37) in tRNA + diphosphate. Catalyzes the transfer of a dimethylallyl group onto the adenine at position 37 in tRNAs that read codons beginning with uridine, leading to the formation of N6-(dimethylallyl)adenosine (i(6)A). In Janthinobacterium sp. (strain Marseille) (Minibacterium massiliensis), this protein is tRNA dimethylallyltransferase.